The primary structure comprises 476 residues: Sulfate adenylyltransferase subunit 1 (476 aa).

The tr-type G domain maps to lysine 24–lysine 240. The G1 stretch occupies residues glycine 33 to serine 40. Position 33-40 (glycine 33–serine 40) interacts with GTP. Residues glycine 91–aspartate 95 are G2. A G3 region spans residues aspartate 112–glycine 115. GTP-binding positions include aspartate 112–histidine 116 and asparagine 167–aspartate 170. The segment at asparagine 167–aspartate 170 is G4. Residues serine 205–leucine 207 form a G5 region.

It belongs to the TRAFAC class translation factor GTPase superfamily. Classic translation factor GTPase family. CysN/NodQ subfamily. As to quaternary structure, heterodimer composed of CysD, the smaller subunit, and CysN.

The catalysed reaction is sulfate + ATP + H(+) = adenosine 5'-phosphosulfate + diphosphate. It functions in the pathway sulfur metabolism; hydrogen sulfide biosynthesis; sulfite from sulfate: step 1/3. With CysD forms the ATP sulfurylase (ATPS) that catalyzes the adenylation of sulfate producing adenosine 5'-phosphosulfate (APS) and diphosphate, the first enzymatic step in sulfur assimilation pathway. APS synthesis involves the formation of a high-energy phosphoric-sulfuric acid anhydride bond driven by GTP hydrolysis by CysN coupled to ATP hydrolysis by CysD. The protein is Sulfate adenylyltransferase subunit 1 of Vibrio cholerae serotype O1 (strain ATCC 39541 / Classical Ogawa 395 / O395).